We begin with the raw amino-acid sequence, 310 residues long: 4-diphosphocytidyl-2-C-methyl-D-erythritol kinase (310 aa).

Lys20 is an active-site residue. Residue 106–116 participates in ATP binding; the sequence is PMGGGLGGGSS. Asp148 is an active-site residue.

It belongs to the GHMP kinase family. IspE subfamily. As to quaternary structure, homodimer.

The catalysed reaction is 4-CDP-2-C-methyl-D-erythritol + ATP = 4-CDP-2-C-methyl-D-erythritol 2-phosphate + ADP + H(+). Its pathway is isoprenoid biosynthesis; isopentenyl diphosphate biosynthesis via DXP pathway; isopentenyl diphosphate from 1-deoxy-D-xylulose 5-phosphate: step 3/6. Its function is as follows. Catalyzes the phosphorylation of the position 2 hydroxy group of 4-diphosphocytidyl-2C-methyl-D-erythritol. In Yersinia pseudotuberculosis serotype O:3 (strain YPIII), this protein is 4-diphosphocytidyl-2-C-methyl-D-erythritol kinase.